Reading from the N-terminus, the 131-residue chain is Increased copper sensitivity protein 3 (131 aa).

The next 2 helical transmembrane spans lie at 35 to 55 (ISVL…IFFS) and 74 to 94 (IALT…IIAF).

It localises to the membrane. The sequence is that of Increased copper sensitivity protein 3 (ICS3) from Saccharomyces cerevisiae (strain ATCC 204508 / S288c) (Baker's yeast).